The chain runs to 953 residues: Probable isoleucine--tRNA ligase, cytoplasmic (953 aa).

Positions 45–55 (PFATGLPHYGH) match the 'HIGH' region motif. A 'KMSKS' region motif is present at residues 634–638 (KMSKR). ATP is bound at residue K637.

Belongs to the class-I aminoacyl-tRNA synthetase family.

It localises to the cytoplasm. The enzyme catalyses tRNA(Ile) + L-isoleucine + ATP = L-isoleucyl-tRNA(Ile) + AMP + diphosphate. This Enterocytozoon bieneusi (strain H348) (Microsporidian parasite) protein is Probable isoleucine--tRNA ligase, cytoplasmic.